A 349-amino-acid chain; its full sequence is Farnesyl pyrophosphate synthase (349 aa).

Lysine 48, arginine 51, and glutamine 90 together coordinate isopentenyl diphosphate. Mg(2+) is bound by residues aspartate 97 and aspartate 101. Dimethylallyl diphosphate is bound at residue arginine 106. Arginine 107 provides a ligand contact to isopentenyl diphosphate. Residues lysine 194, threonine 195, glutamine 234, lysine 251, and lysine 260 each coordinate dimethylallyl diphosphate.

The protein belongs to the FPP/GGPP synthase family. Mg(2+) is required as a cofactor.

The protein localises to the cytoplasm. The catalysed reaction is isopentenyl diphosphate + dimethylallyl diphosphate = (2E)-geranyl diphosphate + diphosphate. It catalyses the reaction isopentenyl diphosphate + (2E)-geranyl diphosphate = (2E,6E)-farnesyl diphosphate + diphosphate. It participates in isoprenoid biosynthesis; farnesyl diphosphate biosynthesis; farnesyl diphosphate from geranyl diphosphate and isopentenyl diphosphate: step 1/1. It functions in the pathway isoprenoid biosynthesis; geranyl diphosphate biosynthesis; geranyl diphosphate from dimethylallyl diphosphate and isopentenyl diphosphate: step 1/1. Its function is as follows. Catalyzes the sequential condensation of isopentenyl pyrophosphate with the allylic pyrophosphates, dimethylallyl pyrophosphate, and then with the resultant geranylpyrophosphate to the ultimate product farnesyl pyrophosphate. This Kluyveromyces lactis (strain ATCC 8585 / CBS 2359 / DSM 70799 / NBRC 1267 / NRRL Y-1140 / WM37) (Yeast) protein is Farnesyl pyrophosphate synthase (FPS1).